The following is a 305-amino-acid chain: Dihydroorotate dehydrogenase B (NAD(+)), catalytic subunit (305 aa).

FMN is bound by residues Ser-23 and 47–48; that span reads KG. Substrate contacts are provided by residues Lys-47 and 71–75; that span reads NAIGL. FMN-binding residues include Asn-101 and Asn-129. Asn-129 serves as a coordination point for substrate. Cys-132 (nucleophile) is an active-site residue. Residues Lys-167 and Ile-193 each coordinate FMN. 194 to 195 lines the substrate pocket; that stretch reads NT. FMN is bound by residues Gly-219, 245 to 246, and 267 to 268; these read GG and GT.

This sequence belongs to the dihydroorotate dehydrogenase family. Type 1 subfamily. Heterotetramer of 2 PyrK and 2 PyrD type B subunits. FMN is required as a cofactor.

The protein localises to the cytoplasm. The enzyme catalyses (S)-dihydroorotate + NAD(+) = orotate + NADH + H(+). The protein operates within pyrimidine metabolism; UMP biosynthesis via de novo pathway; orotate from (S)-dihydroorotate (NAD(+) route): step 1/1. Its function is as follows. Catalyzes the conversion of dihydroorotate to orotate with NAD(+) as electron acceptor. This Geotalea daltonii (strain DSM 22248 / JCM 15807 / FRC-32) (Geobacter daltonii) protein is Dihydroorotate dehydrogenase B (NAD(+)), catalytic subunit (pyrD).